A 1261-amino-acid chain; its full sequence is Mediator of RNA polymerase II transcription subunit 14 (1261 aa).

Basic and acidic residues predominate over residues 1 to 11 (MPNGKQQHEVT). Disordered stretches follow at residues 1-21 (MPNG…EIPH), 413-435 (NETA…GETE), and 1193-1220 (DNDI…ENET). The span at 417–427 (IVDDNDNDNDD) shows a compositional bias: acidic residues. Basic and acidic residues predominate over residues 1205–1220 (QNEKENSKTTSKENET).

This sequence belongs to the Mediator complex subunit 14 family. Component of the Mediator complex.

It localises to the nucleus. Its function is as follows. Component of the Mediator complex, a coactivator involved in the regulated transcription of nearly all RNA polymerase II-dependent genes. Mediator functions as a bridge to convey information from gene-specific regulatory proteins to the basal RNA polymerase II transcription machinery. Mediator is recruited to promoters by direct interactions with regulatory proteins and serves as a scaffold for the assembly of a functional preinitiation complex with RNA polymerase II and the general transcription factors. The sequence is that of Mediator of RNA polymerase II transcription subunit 14 (MED14) from Candida albicans (strain SC5314 / ATCC MYA-2876) (Yeast).